The chain runs to 248 residues: Triosephosphate isomerase A (248 aa).

Substrate is bound by residues Asn11 and Lys13. The active-site Electrophile is His95. Glu165 serves as the catalytic Proton acceptor.

This sequence belongs to the triosephosphate isomerase family. In terms of assembly, homodimer.

It localises to the cytoplasm. It catalyses the reaction dihydroxyacetone phosphate = methylglyoxal + phosphate. It carries out the reaction D-glyceraldehyde 3-phosphate = dihydroxyacetone phosphate. Its pathway is carbohydrate degradation; glycolysis; D-glyceraldehyde 3-phosphate from glycerone phosphate: step 1/1. It functions in the pathway carbohydrate biosynthesis; gluconeogenesis. Triosephosphate isomerase is an extremely efficient metabolic enzyme that catalyzes the interconversion between dihydroxyacetone phosphate (DHAP) and D-glyceraldehyde-3-phosphate (G3P) in glycolysis and gluconeogenesis. In terms of biological role, it is also responsible for the non-negligible production of methylglyoxal a reactive cytotoxic side-product that modifies and can alter proteins, DNA and lipids. The chain is Triosephosphate isomerase A (tpi1a) from Danio rerio (Zebrafish).